The sequence spans 319 residues: Molybdenum cofactor biosynthesis bifunctional protein (319 aa).

Residues 1 to 145 (MIDVGDKAVT…GKSGHWQRPA (145 aa)) form a molybdenum cofactor biosynthesis protein C region. Residues 61-63 (LCH) and 99-100 (ME) each bind substrate. Aspartate 114 is an active-site residue. The interval 146–319 (IAPDVAPTGA…KGADHGTVKG (174 aa)) is molybdenum cofactor biosynthesis protein B.

This sequence in the N-terminal section; belongs to the MoaC family. In the C-terminal section; belongs to the MoaB/Mog family.

The enzyme catalyses (8S)-3',8-cyclo-7,8-dihydroguanosine 5'-triphosphate = cyclic pyranopterin phosphate + diphosphate. Its pathway is cofactor biosynthesis; molybdopterin biosynthesis. Functionally, catalyzes the conversion of (8S)-3',8-cyclo-7,8-dihydroguanosine 5'-triphosphate to cyclic pyranopterin monophosphate (cPMP). The chain is Molybdenum cofactor biosynthesis bifunctional protein (moaCB) from Synechococcus elongatus (strain ATCC 33912 / PCC 7942 / FACHB-805) (Anacystis nidulans R2).